The following is a 156-amino-acid chain: Small ribosomal subunit protein uS7 (156 aa).

It belongs to the universal ribosomal protein uS7 family. In terms of assembly, part of the 30S ribosomal subunit. Contacts proteins S9 and S11.

In terms of biological role, one of the primary rRNA binding proteins, it binds directly to 16S rRNA where it nucleates assembly of the head domain of the 30S subunit. Is located at the subunit interface close to the decoding center, probably blocks exit of the E-site tRNA. In Bifidobacterium longum (strain NCC 2705), this protein is Small ribosomal subunit protein uS7.